Consider the following 537-residue polypeptide: Eukaryotic translation initiation factor 3 subunit L (537 aa).

The span at 1 to 19 (MSRRVEFDLSTEDHSDRRR) shows a compositional bias: basic and acidic residues. The disordered stretch occupies residues 1–30 (MSRRVEFDLSTEDHSDRRRTNTFSSSADED). The region spanning 299 to 487 (EATKMFVNCL…GPSSADDDEP (189 aa)) is the PCI domain.

It belongs to the eIF-3 subunit L family. As to quaternary structure, component of the eukaryotic translation initiation factor 3 (eIF-3) complex.

Its subcellular location is the cytoplasm. Component of the eukaryotic translation initiation factor 3 (eIF-3) complex, which is involved in protein synthesis of a specialized repertoire of mRNAs and, together with other initiation factors, stimulates binding of mRNA and methionyl-tRNAi to the 40S ribosome. The eIF-3 complex specifically targets and initiates translation of a subset of mRNAs involved in cell proliferation. The sequence is that of Eukaryotic translation initiation factor 3 subunit L from Caenorhabditis elegans.